A 111-amino-acid chain; its full sequence is Probable 4-amino-4-deoxy-L-arabinose-phosphoundecaprenol flippase subunit ArnE (111 aa).

The next 3 membrane-spanning stretches (helical) occupy residues 38–58 (LWLGLALICMGAAMVLWLLVL), 61–81 (LPVGIAYPMLSLNFVWVTLAA), and 91–111 (PRHWLGVALIISGIIILGSAA). Positions 40 to 109 (LGLALICMGA…IISGIIILGS (70 aa)) constitute an EamA domain.

Belongs to the ArnE family. In terms of assembly, heterodimer of ArnE and ArnF.

The protein resides in the cell inner membrane. The protein operates within bacterial outer membrane biogenesis; lipopolysaccharide biosynthesis. Functionally, translocates 4-amino-4-deoxy-L-arabinose-phosphoundecaprenol (alpha-L-Ara4N-phosphoundecaprenol) from the cytoplasmic to the periplasmic side of the inner membrane. The chain is Probable 4-amino-4-deoxy-L-arabinose-phosphoundecaprenol flippase subunit ArnE from Salmonella choleraesuis (strain SC-B67).